Consider the following 396-residue polypeptide: Phosphoglycerate kinase (396 aa).

Residues aspartate 21–asparagine 23, arginine 36, histidine 59–arginine 62, arginine 113, and arginine 146 contribute to the substrate site. Residues lysine 197, glutamate 319, and glycine 345–threonine 348 each bind ATP.

It belongs to the phosphoglycerate kinase family. As to quaternary structure, monomer.

It is found in the cytoplasm. It carries out the reaction (2R)-3-phosphoglycerate + ATP = (2R)-3-phospho-glyceroyl phosphate + ADP. Its pathway is carbohydrate degradation; glycolysis; pyruvate from D-glyceraldehyde 3-phosphate: step 2/5. The sequence is that of Phosphoglycerate kinase from Legionella pneumophila (strain Lens).